The primary structure comprises 54 residues: UPF0391 membrane protein Rfer_1875 (54 aa).

Helical transmembrane passes span 5–25 and 30–50; these read AVVF…GIAA and IGKI…LFGL.

It belongs to the UPF0391 family.

The protein localises to the cell membrane. The protein is UPF0391 membrane protein Rfer_1875 of Albidiferax ferrireducens (strain ATCC BAA-621 / DSM 15236 / T118) (Rhodoferax ferrireducens).